Consider the following 208-residue polypeptide: Uracil phosphoribosyltransferase (208 aa).

5-phospho-alpha-D-ribose 1-diphosphate is bound by residues Arg-78, Arg-103, and 130–138 (DPMLATGGS). Uracil-binding positions include Ile-193 and 198–200 (GDA). Asp-199 is a 5-phospho-alpha-D-ribose 1-diphosphate binding site.

Belongs to the UPRTase family. Requires Mg(2+) as cofactor.

The enzyme catalyses UMP + diphosphate = 5-phospho-alpha-D-ribose 1-diphosphate + uracil. It functions in the pathway pyrimidine metabolism; UMP biosynthesis via salvage pathway; UMP from uracil: step 1/1. Its activity is regulated as follows. Allosterically activated by GTP. Catalyzes the conversion of uracil and 5-phospho-alpha-D-ribose 1-diphosphate (PRPP) to UMP and diphosphate. The sequence is that of Uracil phosphoribosyltransferase from Blochmanniella pennsylvanica (strain BPEN).